Here is a 95-residue protein sequence, read N- to C-terminus: Aspartyl/glutamyl-tRNA(Asn/Gln) amidotransferase subunit C (95 aa).

Belongs to the GatC family. As to quaternary structure, heterotrimer of A, B and C subunits.

The enzyme catalyses L-glutamyl-tRNA(Gln) + L-glutamine + ATP + H2O = L-glutaminyl-tRNA(Gln) + L-glutamate + ADP + phosphate + H(+). The catalysed reaction is L-aspartyl-tRNA(Asn) + L-glutamine + ATP + H2O = L-asparaginyl-tRNA(Asn) + L-glutamate + ADP + phosphate + 2 H(+). Allows the formation of correctly charged Asn-tRNA(Asn) or Gln-tRNA(Gln) through the transamidation of misacylated Asp-tRNA(Asn) or Glu-tRNA(Gln) in organisms which lack either or both of asparaginyl-tRNA or glutaminyl-tRNA synthetases. The reaction takes place in the presence of glutamine and ATP through an activated phospho-Asp-tRNA(Asn) or phospho-Glu-tRNA(Gln). The chain is Aspartyl/glutamyl-tRNA(Asn/Gln) amidotransferase subunit C from Rhodopseudomonas palustris (strain BisA53).